The following is a 229-amino-acid chain: Dephospho-CoA kinase (229 aa).

The DPCK domain occupies 3 to 203 (TVGLTGGIGS…ARRDAKATAK (201 aa)). 11–16 (GSGKSA) is an ATP binding site. The disordered stretch occupies residues 203–229 (KATAKAETVASGTDTAASGTDTAAPAG).

Belongs to the CoaE family.

The protein localises to the cytoplasm. The enzyme catalyses 3'-dephospho-CoA + ATP = ADP + CoA + H(+). It participates in cofactor biosynthesis; coenzyme A biosynthesis; CoA from (R)-pantothenate: step 5/5. Functionally, catalyzes the phosphorylation of the 3'-hydroxyl group of dephosphocoenzyme A to form coenzyme A. The chain is Dephospho-CoA kinase from Frankia casuarinae (strain DSM 45818 / CECT 9043 / HFP020203 / CcI3).